The primary structure comprises 395 residues: Sulfate adenylyltransferase (395 aa).

The protein belongs to the sulfate adenylyltransferase family.

It catalyses the reaction sulfate + ATP + H(+) = adenosine 5'-phosphosulfate + diphosphate. Its pathway is sulfur metabolism; hydrogen sulfide biosynthesis; sulfite from sulfate: step 1/3. The sequence is that of Sulfate adenylyltransferase from Synechococcus elongatus (strain ATCC 33912 / PCC 7942 / FACHB-805) (Anacystis nidulans R2).